The primary structure comprises 227 residues: uncharacterized protein (227 aa).

Residues 1–23 form the signal peptide; sequence MKKLTVTFLTFISIFFAATAAFA.

This is an uncharacterized protein from Coxiella burnetii (strain RSA 493 / Nine Mile phase I).